The following is a 695-amino-acid chain: Translation initiation factor IF-2 (695 aa).

Residues 60–92 (KKSASSKKKTEKEVEEEEIETPKKKKKQEEKIP) form a disordered region. One can recognise a tr-type G domain in the interval 184 to 358 (QRPPVVTVMG…EMSEIKCIPT (175 aa)). Positions 193 to 200 (GHVDHGKT) are G1. GTP is bound at residue 193–200 (GHVDHGKT). Residues 218–222 (GITQS) form a G2 region. Residues 239–242 (DTPG) are G3. GTP contacts are provided by residues 239–243 (DTPGH) and 293–296 (NKID). The segment at 293 to 296 (NKID) is G4. Residues 330 to 332 (SAK) are G5.

This sequence belongs to the TRAFAC class translation factor GTPase superfamily. Classic translation factor GTPase family. IF-2 subfamily.

It localises to the cytoplasm. One of the essential components for the initiation of protein synthesis. Protects formylmethionyl-tRNA from spontaneous hydrolysis and promotes its binding to the 30S ribosomal subunits. Also involved in the hydrolysis of GTP during the formation of the 70S ribosomal complex. The protein is Translation initiation factor IF-2 of Kosmotoga olearia (strain ATCC BAA-1733 / DSM 21960 / TBF 19.5.1).